Here is a 341-residue protein sequence, read N- to C-terminus: Glycerol-3-phosphate dehydrogenase [NAD(P)+] (341 aa).

Residues Ser12, Trp13, Arg33, and Lys107 each coordinate NADPH. Residues Lys107, Gly134, and Thr136 each coordinate sn-glycerol 3-phosphate. Ala138 contributes to the NADPH binding site. Lys189, Asp242, Ser252, Arg253, and Asn254 together coordinate sn-glycerol 3-phosphate. The active-site Proton acceptor is Lys189. Arg253 lines the NADPH pocket. Positions 277 and 279 each coordinate NADPH.

It belongs to the NAD-dependent glycerol-3-phosphate dehydrogenase family.

The protein resides in the cytoplasm. The catalysed reaction is sn-glycerol 3-phosphate + NAD(+) = dihydroxyacetone phosphate + NADH + H(+). It carries out the reaction sn-glycerol 3-phosphate + NADP(+) = dihydroxyacetone phosphate + NADPH + H(+). The protein operates within membrane lipid metabolism; glycerophospholipid metabolism. Its function is as follows. Catalyzes the reduction of the glycolytic intermediate dihydroxyacetone phosphate (DHAP) to sn-glycerol 3-phosphate (G3P), the key precursor for phospholipid synthesis. This Halothermothrix orenii (strain H 168 / OCM 544 / DSM 9562) protein is Glycerol-3-phosphate dehydrogenase [NAD(P)+].